The sequence spans 236 residues: Large ribosomal subunit protein eL6 (236 aa).

This sequence belongs to the eukaryotic ribosomal protein eL6 family.

The protein is Large ribosomal subunit protein eL6 (rpl6) of Dictyostelium discoideum (Social amoeba).